A 481-amino-acid polypeptide reads, in one-letter code: Dynein axonemal assembly factor 8 (481 aa).

4 disordered regions span residues 70-91 (DESG…LVPG), 131-233 (LDTK…EGRP), 306-397 (TWKV…PVAS), and 415-454 (RAFR…KKHI). Residues serine 83, serine 145, and serine 147 each carry the phosphoserine modification. Positions 144 to 155 (GSQSPPWSSQGE) are enriched in polar residues. A compositionally biased stretch (basic and acidic residues) spans 163–176 (GKLKTEPSDTDFKN). Over residues 177-188 (SAKRRALRRERR) the composition is skewed to basic residues. The segment covering 198–211 (KVTQAAQNPASGDQ) has biased composition (polar residues). The span at 310–322 (SADKLQDTEEQVA) shows a compositional bias: basic and acidic residues. Over residues 323–336 (RTRSASAESGFQTE) the composition is skewed to polar residues. Serine 328 bears the Phosphoserine mark. Basic and acidic residues-rich tracts occupy residues 337 to 349 (RVQK…RLKT) and 359 to 380 (RLTE…HSSS).

It localises to the dynein axonemal particle. The protein resides in the cytoplasm. Functionally, in cyliated cells, dynein axonemal particle-specific protein required for deployment of ODA to the axoneme. Interacts with outer dynein arm (ODA) subunits. The chain is Dynein axonemal assembly factor 8 (Dnaaf8) from Rattus norvegicus (Rat).